The sequence spans 88 residues: Small ribosomal subunit protein uS12 (88 aa).

Positions 1–24 (RKGRRDKIGKVKTAALKGSPQRRG) are disordered. D81 carries the post-translational modification 3-methylthioaspartic acid.

The protein belongs to the universal ribosomal protein uS12 family. Part of the 30S ribosomal subunit. Contacts proteins S8 and S17. May interact with IF1 in the 30S initiation complex.

In terms of biological role, with S4 and S5 plays an important role in translational accuracy. Interacts with and stabilizes bases of the 16S rRNA that are involved in tRNA selection in the A site and with the mRNA backbone. Located at the interface of the 30S and 50S subunits, it traverses the body of the 30S subunit contacting proteins on the other side and probably holding the rRNA structure together. The combined cluster of proteins S8, S12 and S17 appears to hold together the shoulder and platform of the 30S subunit. This is Small ribosomal subunit protein uS12 (rpsL) from Mycobacterium szulgai.